The sequence spans 335 residues: Glycerol-3-phosphate dehydrogenase [NAD(P)+] (335 aa).

Positions 12, 13, and 107 each coordinate NADPH. Sn-glycerol 3-phosphate contacts are provided by lysine 107, glycine 138, and serine 140. Residue alanine 142 coordinates NADPH. Sn-glycerol 3-phosphate is bound by residues lysine 193, aspartate 246, serine 256, arginine 257, and asparagine 258. The active-site Proton acceptor is the lysine 193. Residue arginine 257 participates in NADPH binding. Valine 281 and glutamate 283 together coordinate NADPH.

It belongs to the NAD-dependent glycerol-3-phosphate dehydrogenase family.

Its subcellular location is the cytoplasm. The enzyme catalyses sn-glycerol 3-phosphate + NAD(+) = dihydroxyacetone phosphate + NADH + H(+). It catalyses the reaction sn-glycerol 3-phosphate + NADP(+) = dihydroxyacetone phosphate + NADPH + H(+). Its pathway is membrane lipid metabolism; glycerophospholipid metabolism. Functionally, catalyzes the reduction of the glycolytic intermediate dihydroxyacetone phosphate (DHAP) to sn-glycerol 3-phosphate (G3P), the key precursor for phospholipid synthesis. This chain is Glycerol-3-phosphate dehydrogenase [NAD(P)+], found in Geobacter sulfurreducens (strain ATCC 51573 / DSM 12127 / PCA).